A 214-amino-acid chain; its full sequence is Probable septum site-determining protein MinC (214 aa).

Belongs to the MinC family. Interacts with MinD and FtsZ.

Cell division inhibitor that blocks the formation of polar Z ring septums. Rapidly oscillates between the poles of the cell to destabilize FtsZ filaments that have formed before they mature into polar Z rings. Prevents FtsZ polymerization. In Caldanaerobacter subterraneus subsp. tengcongensis (strain DSM 15242 / JCM 11007 / NBRC 100824 / MB4) (Thermoanaerobacter tengcongensis), this protein is Probable septum site-determining protein MinC.